A 138-amino-acid polypeptide reads, in one-letter code: Mitochondrial import inner membrane translocase subunit tim-16 (138 aa).

Over residues 32 to 43 (TQQAAARHAAAT) the composition is skewed to low complexity. 2 disordered regions span residues 32–58 (TQQAAARHAAATGQSPSETKENANANA) and 118–138 (LSRLEQKSEENKEQQKENSKE). The span at 44–56 (GQSPSETKENANA) shows a compositional bias: polar residues. Residues 66–119 (ESLQILNVKTPLNREDVEKHYEHLFAINDKAKGGTFYLQSKVYRAKERIDEELS) are J-like.

The protein belongs to the TIM16/PAM16 family. In terms of assembly, probable component of the PAM complex at least composed of a mitochondrial HSP70 protein, GrpE, tim-44, tim-16 and tim-14. Associates with the TIM23 complex.

The protein localises to the mitochondrion inner membrane. Regulates ATP-dependent protein translocation into the mitochondrial matrix. The protein is Mitochondrial import inner membrane translocase subunit tim-16 of Caenorhabditis briggsae.